A 126-amino-acid chain; its full sequence is MGKEKNPRRVGENEAFAKVKMLRTSPQKLNLVAALIRGKKVDKAIADLTFSKKRISQDVLKCLQSAIANAENNHGLDVDELVVSEAFCGKNLVMKRGRPRARGRFGKIMKPFSELTIKVKQVGETA.

It belongs to the universal ribosomal protein uL22 family. Part of the 50S ribosomal subunit.

In terms of biological role, this protein binds specifically to 23S rRNA; its binding is stimulated by other ribosomal proteins, e.g. L4, L17, and L20. It is important during the early stages of 50S assembly. It makes multiple contacts with different domains of the 23S rRNA in the assembled 50S subunit and ribosome. The globular domain of the protein is located near the polypeptide exit tunnel on the outside of the subunit, while an extended beta-hairpin is found that lines the wall of the exit tunnel in the center of the 70S ribosome. This Cereibacter sphaeroides (strain ATCC 17029 / ATH 2.4.9) (Rhodobacter sphaeroides) protein is Large ribosomal subunit protein uL22.